The sequence spans 437 residues: Argininosuccinate lyase (437 aa).

The protein belongs to the lyase 1 family. Argininosuccinate lyase subfamily.

It is found in the cytoplasm. It carries out the reaction 2-(N(omega)-L-arginino)succinate = fumarate + L-arginine. Its pathway is amino-acid biosynthesis; L-arginine biosynthesis; L-arginine from L-ornithine and carbamoyl phosphate: step 3/3. The protein is Argininosuccinate lyase of Clostridium novyi (strain NT).